We begin with the raw amino-acid sequence, 556 residues long: Phenylalanine--tRNA ligase beta subunit (556 aa).

The region spanning 278-354 (LTPKEFEVSF…IAYGYNNIDP (77 aa)) is the B5 domain. Positions 332, 338, 341, and 342 each coordinate Mg(2+).

Belongs to the phenylalanyl-tRNA synthetase beta subunit family. Type 2 subfamily. Tetramer of two alpha and two beta subunits. Mg(2+) is required as a cofactor.

The protein localises to the cytoplasm. The enzyme catalyses tRNA(Phe) + L-phenylalanine + ATP = L-phenylalanyl-tRNA(Phe) + AMP + diphosphate + H(+). This is Phenylalanine--tRNA ligase beta subunit from Pyrococcus furiosus (strain ATCC 43587 / DSM 3638 / JCM 8422 / Vc1).